A 138-amino-acid polypeptide reads, in one-letter code: Mitochondrial import inner membrane translocase subunit tim-16 (138 aa).

Over residues 32–43 (TQQAAARHAAAT) the composition is skewed to low complexity. Disordered regions lie at residues 32 to 58 (TQQA…NANA) and 118 to 138 (LSRL…NSKE). Positions 44 to 56 (GQSPSETKENANA) are enriched in polar residues. The segment at 66 to 119 (ESLQILNVKTPLNREDVEKHYEHLFAINDKAKGGTFYLQSKVYRAKERIDEELS) is J-like.

The protein belongs to the TIM16/PAM16 family. In terms of assembly, probable component of the PAM complex at least composed of a mitochondrial HSP70 protein, GrpE, tim-44, tim-16 and tim-14. Associates with the TIM23 complex.

It localises to the mitochondrion inner membrane. Its function is as follows. Regulates ATP-dependent protein translocation into the mitochondrial matrix. This is Mitochondrial import inner membrane translocase subunit tim-16 from Caenorhabditis briggsae.